Reading from the N-terminus, the 356-residue chain is Carbohydrate sulfotransferase 10 (356 aa).

The Cytoplasmic segment spans residues 1-6; sequence MHHQWL. A helical; Signal-anchor for type II membrane protein membrane pass occupies residues 7–27; the sequence is LLAACFWVIFMFMVASKFITL. Residues 28 to 356 are Lumenal-facing; it reads TFKDPDGYSA…GYQKPDFLLN (329 aa). Asn-99 is a glycosylation site (N-linked (GlcNAc...) asparagine). 3'-phosphoadenylyl sulfate-binding positions include 127-133 and 189-197; these read PKVGNTQ and RDPFERLIS. Asn-228 and Asn-316 each carry an N-linked (GlcNAc...) asparagine glycan.

Belongs to the sulfotransferase 2 family.

The protein localises to the golgi apparatus membrane. It carries out the reaction 3-O-{beta-D-GlcA-(1-&gt;[3)-alpha-D-Xyl-(1-&gt;3)-beta-D-GlcA-(1-&gt;](n)-4)-beta-D-Xyl-(1-&gt;4)-Rib-ol-P-Rib-ol-P-3-beta-D-GalNAc-(1-&gt;3)-beta-D-GlcNAc-(1-&gt;4)-O-6-P-alpha-D-Man}-L-Thr-[protein] + 3'-phosphoadenylyl sulfate = 3-O-{O-3-S-beta-D-GlcA-(1-&gt;[3)-alpha-D-Xyl-(1-&gt;3)-beta-D-GlcA-(1-&gt;](n)-4)-beta-D-Xyl-(1-&gt;4)-Rib-ol-P-Rib-ol-P-3-beta-D-GalNAc-(1-&gt;3)-beta-D-GlcNAc-(1-&gt;4)-O-6-P-alpha-D-Man}-L-Thr-[protein] + adenosine 3',5'-bisphosphate + H(+). The enzyme catalyses 17beta-estradiol 3-O-(beta-D-glucuronate) + 3'-phosphoadenylyl sulfate = 17beta-estradiol 3-O-(3-sulfo-beta-D-glucuronate) + adenosine 3',5'-bisphosphate + H(+). The catalysed reaction is 17beta-estradiol 3-O-(beta-D-glucuronate) 17-sulfate + 3'-phosphoadenylyl sulfate = 17beta-estradiol 3-O-(3-sulfo-beta-D-glucuronate) 17-sulfate + adenosine 3',5'-bisphosphate + H(+). It catalyses the reaction 17beta-estradiol 17-O-(beta-D-glucuronate) + 3'-phosphoadenylyl sulfate = 17beta-estradiol 17-O-(3-sulfo-beta-D-glucuronate) + adenosine 3',5'-bisphosphate + H(+). It carries out the reaction 16alpha,17beta-estriol 3-O-(beta-D-glucuronate) + 3'-phosphoadenylyl sulfate = 16alpha,17beta-estriol 3-O-(3-sulfo-beta-D-glucuronate) + adenosine 3',5'-bisphosphate + H(+). The enzyme catalyses 16alpha,17beta-estriol 16-O-(beta-D-glucuronate) + 3'-phosphoadenylyl sulfate = 16alpha,17beta-estriol 16-O-(3-sulfo-beta-D-glucuronate) + adenosine 3',5'-bisphosphate + H(+). The catalysed reaction is 16alpha,17beta-estriol 17-O-(beta-D-glucuronate) + 3'-phosphoadenylyl sulfate = 16alpha,17beta-estriol 17-O-(3-sulfo-beta-D-glucuronate) + adenosine 3',5'-bisphosphate + H(+). It catalyses the reaction estrone 3-O-(beta-D-glucuronate) + 3'-phosphoadenylyl sulfate = estrone 3-O-(3-sulfo-beta-D-glucuronate) + adenosine 3',5'-bisphosphate + H(+). It carries out the reaction 3alpha,20alpha-dihydroxy-5beta-pregnane 3-O-(beta-D-glucuronate) + 3'-phosphoadenylyl sulfate = 3alpha,20alpha-dihydroxy-5beta-pregnane 3-O-(3-sulfo-beta-D-glucuronate) + adenosine 3',5'-bisphosphate + H(+). The enzyme catalyses testosterone 17-O-(beta-D-glucuronate) + 3'-phosphoadenylyl sulfate = testosterone 17-O-(3-sulfo-beta-D-glucuronate) + adenosine 3',5'-bisphosphate + H(+). The catalysed reaction is 3beta-androst-5-en-17-one 3-O-(beta-D-glucuronate) + 3'-phosphoadenylyl sulfate = 3beta-androst-5-en-17-one 3-O-(3-sulfo-beta-D-glucuronate) + adenosine 3',5'-bisphosphate + H(+). It catalyses the reaction 3alpha,17alpha-dihydroxy-5beta-androstane-11-one-17beta-carboxylate 3-O-(beta-D-glucuronate) + 3'-phosphoadenylyl sulfate = 3alpha,17alpha-dihydroxy-5beta-androstane-11-one-17beta-carboxylate 3-O-(3-sulfo-beta-D-glucuronate) + adenosine 3',5'-bisphosphate + H(+). It carries out the reaction 3alpha-hydroxyetiocholan-17-one 3-O-(beta-D-glucuronate) + 3'-phosphoadenylyl sulfate = 3alpha-hydroxyetiocholan-17-one 3-O-(3-sulfo-beta-D-glucuronate) + adenosine 3',5'-bisphosphate + H(+). It functions in the pathway steroid metabolism. Its pathway is protein modification; carbohydrate sulfation. Functionally, catalyzes the transfer of sulfate from 3'-phosphoadenylyl sulfate (PAPS) to position 3 of terminal glucuronic acid of both protein- and lipid-linked oligosaccharides. Participates in biosynthesis of HNK-1 carbohydrate structure 3-O-sulfo-beta-D-GlcA-(1-&gt;3)-beta-D-Gal-(1-&gt;4)-D-GlcNAc-R, a sulfated glucuronyl-lactosaminyl residue carried by many neural recognition molecules, which is involved in cell interactions during ontogenetic development and in synaptic plasticity in the adult. May be indirectly involved in synapse plasticity of the hippocampus, via its role in HNK-1 biosynthesis. Sulfates terminal glucuronyl residue of the laminin globular (LG)-domain binding epitope on DAG1/alpha-dystroglycan and prevents further polymerization by LARGE1 glycosyltransferase. Likely defines the chain length of LG epitope, conferring binding specificity to extracellular matrix components. Plays a role in down-regulating the steroid hormones. Sulfates glucuronidated estrogens and androgens with an impact in hormone cycle and fertility. Has a preference for glucuronyl moiety at the 3-hydroxyl group of a sterol ring rather than the 17-hydroxyl group, showing high catalytic efficiency for 17beta-estradiol 3-O-(beta-D-glucuronate) and dehydroepiandrosterone 3-O-(beta-D-glucuronate) hormones. The sequence is that of Carbohydrate sulfotransferase 10 from Mus musculus (Mouse).